A 363-amino-acid chain; its full sequence is Holliday junction branch migration complex subunit RuvB (363 aa).

The segment at Met1–Arg44 is disordered. Positions Pro13–Tyr204 are large ATPase domain (RuvB-L). ATP-binding residues include Ile43, Arg44, Gly85, Lys88, Thr89, Thr90, Arg194, Tyr204, and Arg241. Thr89 contacts Mg(2+). A small ATPAse domain (RuvB-S) region spans residues Glu205–Asn275. Residues Ala278–Pro363 form a head domain (RuvB-H) region. The DNA site is built by Arg333 and Arg338.

It belongs to the RuvB family. As to quaternary structure, homohexamer. Forms an RuvA(8)-RuvB(12)-Holliday junction (HJ) complex. HJ DNA is sandwiched between 2 RuvA tetramers; dsDNA enters through RuvA and exits via RuvB. An RuvB hexamer assembles on each DNA strand where it exits the tetramer. Each RuvB hexamer is contacted by two RuvA subunits (via domain III) on 2 adjacent RuvB subunits; this complex drives branch migration. In the full resolvosome a probable DNA-RuvA(4)-RuvB(12)-RuvC(2) complex forms which resolves the HJ.

Its subcellular location is the cytoplasm. It catalyses the reaction ATP + H2O = ADP + phosphate + H(+). Functionally, the RuvA-RuvB-RuvC complex processes Holliday junction (HJ) DNA during genetic recombination and DNA repair, while the RuvA-RuvB complex plays an important role in the rescue of blocked DNA replication forks via replication fork reversal (RFR). RuvA specifically binds to HJ cruciform DNA, conferring on it an open structure. The RuvB hexamer acts as an ATP-dependent pump, pulling dsDNA into and through the RuvAB complex. RuvB forms 2 homohexamers on either side of HJ DNA bound by 1 or 2 RuvA tetramers; 4 subunits per hexamer contact DNA at a time. Coordinated motions by a converter formed by DNA-disengaged RuvB subunits stimulates ATP hydrolysis and nucleotide exchange. Immobilization of the converter enables RuvB to convert the ATP-contained energy into a lever motion, pulling 2 nucleotides of DNA out of the RuvA tetramer per ATP hydrolyzed, thus driving DNA branch migration. The RuvB motors rotate together with the DNA substrate, which together with the progressing nucleotide cycle form the mechanistic basis for DNA recombination by continuous HJ branch migration. Branch migration allows RuvC to scan DNA until it finds its consensus sequence, where it cleaves and resolves cruciform DNA. In Picosynechococcus sp. (strain ATCC 27264 / PCC 7002 / PR-6) (Agmenellum quadruplicatum), this protein is Holliday junction branch migration complex subunit RuvB.